A 334-amino-acid polypeptide reads, in one-letter code: Fructose-1,6-bisphosphatase class 1 (334 aa).

The Mg(2+) site is built by Glu-87, Asp-106, Leu-108, and Asp-109. Residues 109–112 (DGSS), Asn-208, and Lys-274 contribute to the substrate site. A Mg(2+)-binding site is contributed by Glu-280.

This sequence belongs to the FBPase class 1 family. In terms of assembly, homotetramer. Mg(2+) is required as a cofactor.

The protein resides in the cytoplasm. The catalysed reaction is beta-D-fructose 1,6-bisphosphate + H2O = beta-D-fructose 6-phosphate + phosphate. It participates in carbohydrate biosynthesis; gluconeogenesis. This is Fructose-1,6-bisphosphatase class 1 from Psychrobacter sp. (strain PRwf-1).